The following is a 111-amino-acid chain: Disintegrin subunit alpha (111 aa).

The signal sequence occupies residues 1–20 (MIQVLLVTICLAVFPYQGSS). Residues 21 to 44 (IILESGNVNDYEVVYPRKITPLPK) constitute a propeptide that is removed on maturation. The Disintegrin domain maps to 45–111 (GAVQPKNPCC…GDCPRKHFYA (67 aa)). Intrachain disulfides connect cysteine 53–cysteine 76, cysteine 67–cysteine 73, cysteine 72–cysteine 97, and cysteine 85–cysteine 104. The short motif at 89-91 (RGD) is the Cell attachment site element. A propeptide spanning residues 110–111 (YA) is cleaved from the precursor.

Belongs to the disintegrin family. Dimeric disintegrin subfamily. In terms of assembly, heterodimer with subunit beta; disulfide-linked. In terms of tissue distribution, expressed by the venom gland.

The protein localises to the secreted. Its function is as follows. Acts by binding to alpha-IIb/beta-3 (ITGA2B/ITGB3) on the platelet surface and inhibits both ADP-induced platelet aggregation and platelet aggregate dissociation in human platelet-rich plasma. This chain is Disintegrin subunit alpha, found in Agkistrodon piscivorus leucostoma (Western cottonmouth).